A 59-amino-acid chain; its full sequence is UPF0434 protein lpl1884 (59 aa).

The protein belongs to the UPF0434 family.

This Legionella pneumophila (strain Lens) protein is UPF0434 protein lpl1884.